Reading from the N-terminus, the 102-residue chain is Iron-sulfur cluster assembly protein CyaY (102 aa).

It belongs to the frataxin family.

In terms of biological role, involved in iron-sulfur (Fe-S) cluster assembly. May act as a regulator of Fe-S biogenesis. The protein is Iron-sulfur cluster assembly protein CyaY of Pasteurella multocida (strain Pm70).